Here is a 226-residue protein sequence, read N- to C-terminus: Small ribosomal subunit protein uS5 (226 aa).

The segment at 1-71 is disordered; that stretch reads MEDIKHNKKP…RKNEKRTKSE (71 aa). Over residues 24–54 the composition is skewed to low complexity; the sequence is ANPQANHANPNNRSASVNNNSVNNNKKNSSR. In terms of domain architecture, S5 DRBM spans 72 to 135; that stretch reads FEEKIVKISR…KMAENNVQKI (64 aa).

It belongs to the universal ribosomal protein uS5 family. Part of the 30S ribosomal subunit. Contacts proteins S4 and S8.

Functionally, with S4 and S12 plays an important role in translational accuracy. Its function is as follows. Located at the back of the 30S subunit body where it stabilizes the conformation of the head with respect to the body. In Mycoplasmoides gallisepticum (strain R(low / passage 15 / clone 2)) (Mycoplasma gallisepticum), this protein is Small ribosomal subunit protein uS5.